We begin with the raw amino-acid sequence, 231 residues long: Heptaprenylglyceryl phosphate synthase (231 aa).

A sn-glycerol 1-phosphate-binding site is contributed by Lys12. Mg(2+) contacts are provided by Asp14 and Thr40. Sn-glycerol 1-phosphate contacts are provided by residues Tyr159–Gly164, Gly189, and Gly209–Asn210.

Belongs to the GGGP/HepGP synthase family. Group I subfamily. Homodimer. Mg(2+) is required as a cofactor.

It carries out the reaction sn-glycerol 1-phosphate + all-trans-heptaprenyl diphosphate = 3-heptaprenyl-sn-glycero-1-phosphate + diphosphate. It participates in membrane lipid metabolism; glycerophospholipid metabolism. Functionally, prenyltransferase that catalyzes in vivo the transfer of the heptaprenyl moiety of heptaprenyl pyrophosphate (HepPP; 35 carbon atoms) to the C3 hydroxyl of sn-glycerol-1-phosphate (G1P), producing heptaprenylglyceryl phosphate (HepGP). This reaction is an ether-bond-formation step in the biosynthesis of archaea-type G1P-based membrane lipids found in Bacillales. The chain is Heptaprenylglyceryl phosphate synthase from Staphylococcus haemolyticus (strain JCSC1435).